The chain runs to 273 residues: Putative ankyrin repeat protein RBE_0317 (273 aa).

ANK repeat units lie at residues 31 to 60, 93 to 123, 127 to 157, 161 to 191, and 195 to 225; these read LGKEIFPIATFFDKNDIIRTLMEEKIDFYS, NGNTLLHAAIDQGKSEVVKFLTSYKNLEVNT, GGNSPLHLAIKSNNPEIVEMLLSYENINVNE, YGDTTLHKAIRSYNHKIIEMLLLREEIDVNE, and QGETPLHGAVKSNRPEIVKMLLSHKNMDTKQ.

The sequence is that of Putative ankyrin repeat protein RBE_0317 from Rickettsia bellii (strain RML369-C).